Here is a 263-residue protein sequence, read N- to C-terminus: Calpain small subunit 1 (263 aa).

N-acetylmethionine is present on Met-1. The residue at position 6 (Ser-6) is a Phosphoserine. An EF-hand 1; atypical domain is found at 91 to 125; it reads EEVRQFRRLFAQLAGDDMEVSATELMNILNKVVTR. Ca(2+) contacts are provided by Ala-104, Asp-107, Glu-109, Glu-114, Asp-132, Asp-147, Asp-149, Thr-151, Lys-153, and Glu-158. 4 EF-hand domains span residues 134 to 167, 164 to 199, 200 to 228, and 229 to 263; these read FGIDTCRSMVAVMDSDTTGKLGFEEFKYLWNNIK, NNIKKWQAVYKQFDVDRSGTIGSSELPGAFEAAGFR, LNEHLYNMIIRRYSDEGGNMDFDNFISCL, and VRLDAMFRAFKSLDKDGTGQIQVNIQEWLQLTMYS. An N6-acetyllysine modification is found at Lys-174. Residues Asp-177, Asp-179, Ser-181, Thr-183, Glu-188, and Asp-220 each coordinate Ca(2+).

As to quaternary structure, homodimer or heterodimer of a large (catalytic) and a small (regulatory) subunit. In presence of calcium, the heterodimer dissociates.

The protein localises to the cytoplasm. It is found in the cell membrane. Its function is as follows. Regulatory subunit of the calcium-regulated non-lysosomal thiol-protease which catalyzes limited proteolysis of substrates involved in cytoskeletal remodeling and signal transduction. Essential for embryonic development. This chain is Calpain small subunit 1 (CAPNS1), found in Bos taurus (Bovine).